A 266-amino-acid polypeptide reads, in one-letter code: Uracil-DNA glycosylase (266 aa).

The tract at residues 1–25 (MTRRADPAQATLFDDDEPAGAPTAT) is disordered. The active-site Proton acceptor is Asp97.

Belongs to the uracil-DNA glycosylase (UDG) superfamily. UNG family.

It is found in the cytoplasm. It carries out the reaction Hydrolyzes single-stranded DNA or mismatched double-stranded DNA and polynucleotides, releasing free uracil.. Functionally, excises uracil residues from the DNA which can arise as a result of misincorporation of dUMP residues by DNA polymerase or due to deamination of cytosine. The polypeptide is Uracil-DNA glycosylase (Ralstonia nicotianae (strain ATCC BAA-1114 / GMI1000) (Ralstonia solanacearum)).